The following is a 226-amino-acid chain: Small ribosomal subunit protein uS3 (226 aa).

The 69-residue stretch at 39–107 (VRNFIRKKLA…PVHINIEEIR (69 aa)) folds into the KH type-2 domain.

This sequence belongs to the universal ribosomal protein uS3 family. In terms of assembly, part of the 30S ribosomal subunit. Forms a tight complex with proteins S10 and S14.

Functionally, binds the lower part of the 30S subunit head. Binds mRNA in the 70S ribosome, positioning it for translation. In Alkalilimnicola ehrlichii (strain ATCC BAA-1101 / DSM 17681 / MLHE-1), this protein is Small ribosomal subunit protein uS3.